Consider the following 205-residue polypeptide: Holliday junction branch migration complex subunit RuvA (205 aa).

A domain I region spans residues 1–64 (MIGRLRGTLA…EDAHLLYGFA (64 aa)). Positions 65–143 (EKRERELFRE…AWETSPAMFT (79 aa)) are domain II. The segment at 144 to 154 (LVSDGPLPVAS) is flexible linker. Residues 154-205 (SESSAEADAVSALVSLGYKPQEASKAIAAIKDKAGLSSEELIRRSLKGMISK) form a domain III region.

It belongs to the RuvA family. In terms of assembly, homotetramer. Forms an RuvA(8)-RuvB(12)-Holliday junction (HJ) complex. HJ DNA is sandwiched between 2 RuvA tetramers; dsDNA enters through RuvA and exits via RuvB. An RuvB hexamer assembles on each DNA strand where it exits the tetramer. Each RuvB hexamer is contacted by two RuvA subunits (via domain III) on 2 adjacent RuvB subunits; this complex drives branch migration. In the full resolvosome a probable DNA-RuvA(4)-RuvB(12)-RuvC(2) complex forms which resolves the HJ.

It localises to the cytoplasm. The RuvA-RuvB-RuvC complex processes Holliday junction (HJ) DNA during genetic recombination and DNA repair, while the RuvA-RuvB complex plays an important role in the rescue of blocked DNA replication forks via replication fork reversal (RFR). RuvA specifically binds to HJ cruciform DNA, conferring on it an open structure. The RuvB hexamer acts as an ATP-dependent pump, pulling dsDNA into and through the RuvAB complex. HJ branch migration allows RuvC to scan DNA until it finds its consensus sequence, where it cleaves and resolves the cruciform DNA. This chain is Holliday junction branch migration complex subunit RuvA, found in Pseudomonas putida (strain ATCC 47054 / DSM 6125 / CFBP 8728 / NCIMB 11950 / KT2440).